A 352-amino-acid polypeptide reads, in one-letter code: Phosphoribosylformylglycinamidine cyclo-ligase (352 aa).

Belongs to the AIR synthase family.

The protein localises to the cytoplasm. It catalyses the reaction 2-formamido-N(1)-(5-O-phospho-beta-D-ribosyl)acetamidine + ATP = 5-amino-1-(5-phospho-beta-D-ribosyl)imidazole + ADP + phosphate + H(+). It participates in purine metabolism; IMP biosynthesis via de novo pathway; 5-amino-1-(5-phospho-D-ribosyl)imidazole from N(2)-formyl-N(1)-(5-phospho-D-ribosyl)glycinamide: step 2/2. This is Phosphoribosylformylglycinamidine cyclo-ligase from Hahella chejuensis (strain KCTC 2396).